Here is a 174-residue protein sequence, read N- to C-terminus: Small ribosomal subunit protein uS5 (174 aa).

The region spanning 19–82 (LREKMIAVNR…EQARRGMFKV (64 aa)) is the S5 DRBM domain.

It belongs to the universal ribosomal protein uS5 family. As to quaternary structure, part of the 30S ribosomal subunit. Contacts proteins S4 and S8.

With S4 and S12 plays an important role in translational accuracy. In terms of biological role, located at the back of the 30S subunit body where it stabilizes the conformation of the head with respect to the body. This Bordetella bronchiseptica (strain ATCC BAA-588 / NCTC 13252 / RB50) (Alcaligenes bronchisepticus) protein is Small ribosomal subunit protein uS5.